We begin with the raw amino-acid sequence, 285 residues long: uncharacterized protein (285 aa).

Residues 197–217 traverse the membrane as a helical segment; sequence PTIGALLSLVSAFFSFIPFLM.

The protein localises to the membrane. This is an uncharacterized protein from Saccharomyces cerevisiae (strain ATCC 204508 / S288c) (Baker's yeast).